The following is a 93-amino-acid chain: Small ribosomal subunit protein uS19 (93 aa).

It belongs to the universal ribosomal protein uS19 family.

Its function is as follows. Protein S19 forms a complex with S13 that binds strongly to the 16S ribosomal RNA. The polypeptide is Small ribosomal subunit protein uS19 (Campylobacter hominis (strain ATCC BAA-381 / DSM 21671 / CCUG 45161 / LMG 19568 / NCTC 13146 / CH001A)).